Reading from the N-terminus, the 289-residue chain is Tumor necrosis factor receptor superfamily member 5 (289 aa).

The N-terminal stretch at 1–19 (MVSLPRLCALWGCLLTAVH) is a signal peptide. Residues 20–193 (LGQCVTCSDK…VICGLKSRMR (174 aa)) lie on the Extracellular side of the membrane. 4 TNFR-Cys repeats span residues 25–60 (TCSD…TQCH), 61–103 (PCDS…DTVC), 104–144 (TCKE…TVCH), and 145–187 (PCPV…VICG). Cystine bridges form between Cys-26/Cys-37, Cys-38/Cys-51, Cys-41/Cys-59, Cys-62/Cys-77, Cys-83/Cys-103, Cys-105/Cys-119, Cys-111/Cys-116, and Cys-125/Cys-143. Asn-153 carries an N-linked (GlcNAc...) asparagine glycan. The chain crosses the membrane as a helical span at residues 194–215 (ALLVIPVVMGILITIFGVFLYI). Topologically, residues 216 to 289 (KKVVKKPKDN…TDSIALRPLV (74 aa)) are cytoplasmic. Residues 228–251 (LPPAARRQDPQEMEDYPGHNTAAP) form a disordered region.

In terms of assembly, monomer and homodimer. Interacts with TRAF1, TRAF2 and TRAF6. Interacts with TRAF3 and TRAF5. Interacts with TRAF6 and MAP3K8; the interaction is required for ERK activation.

The protein resides in the cell membrane. It is found in the secreted. Functionally, receptor for TNFSF5/CD40LG. Transduces TRAF6- and MAP3K8-mediated signals that activate ERK in macrophages and B cells, leading to induction of immunoglobulin secretion. This is Tumor necrosis factor receptor superfamily member 5 (Cd40) from Mus musculus (Mouse).